The chain runs to 872 residues: MGKKIKKEVEPPPKDVFDPLMIESKKAATVVLMLNSPEEEILAKACEAIYKFALKGEENKTTLLELGAVEPLTKLLTHEDKIVRRNATMIFGILASNNDVKKLLRELDVMNSVIAQLAPEEEVVIHEFASLCLANMSAEYTSKVQIFEHGGLEPLIRLLSSPDPDVKKNSMECIYNLVQDFQCRAKLQELNAIPPILDLLKSEYPVIQLLALKTLGVIANDKESRTMLRDNQGLDHLIKILETKELNDLHIEALAVIANCLEDMDTMVQIQQTGGLKKLLSFAENSTIPDIQKNAAKAITKAAYDPENRKLFHEQEVEKCLVALLGSENDGTKIAASQAISAMCENSGSKDFFNNQGIPQLIQLLKSDNEEVREAAALALANLTTCNPANANAAAEADGIDPLINLLSSKRDGAIANAATVLTNMAMQEPLRLNIQNHDIMHAIISPLRSANTVVQSKAALAVTATACDVEARTELRNSGGLEPLVELLRSKNDEVRKHASWAVMVCAGDELTANELCRLGALDILEEVNVSGTRKNKFSEAAYNKLLNNNLSLKYSQTGYLSSSNIINDGFYDYGRINPGTKLLPLKELCLQEPSDLRAVLLINSKSYVSPPSSMEDKSDVGYGRSISSSSSLRRSSKEKNKKNSYHFSAGFGSPIEDKSEPASGRNTVLSKSATKEKGWRKSKGKKEEEKVKEEEEVMVVPKFVGEGSSDKEWCPPSDPDFSMYVYEVTKSILPITNIKEQIEDLAKYVAEKMGGKIPKEKLPDFSWELHISELKFQLKSNVIPIGHVKKGIFYHRALLFKALADRIGIGCSLVRGEYGRAWNEVMLQNDSRKGVIGGLPAPEMYVIDLMFHPGGLMKLRSREADLYRFI.

12 ARM repeats span residues 15 to 54 (DVFD…KFAL), 57 to 96 (EENK…ILAS), 98 to 138 (NDVK…NMSA), 140 to 179 (YTSK…NLVQ), 181 to 220 (FQCR…VIAN), 222 to 262 (KESR…NCLE), 264 to 304 (MDTM…KAAY), 306 to 345 (PENR…AMCE), 346 to 385 (NSGS…NLTT), 388 to 427 (PANA…NMAM), 429 to 468 (EPLR…ATAC), and 470 to 509 (VEAR…VCAG). S-palmitoyl cysteine attachment occurs at residues C507 and C518. The tract at residues 610–693 (VSPPSSMEDK…SKGKKEEEKV (84 aa)) is disordered. The segment covering 626–635 (RSISSSSSLR) has biased composition (low complexity). A compositionally biased stretch (basic residues) spans 636-646 (RSSKEKNKKNS). The span at 675 to 693 (ATKEKGWRKSKGKKEEEKV) shows a compositional bias: basic and acidic residues.

Homodimer. Interacts with PIK3C3, PIK3R4 and BECN1. Interacts (via ARM domains) with ATG14. Post-translationally, palmitoylation is important for its function in autophagy. As to expression, expressed in skeletal muscle, brain, lung, kidney, prostate and testis. Mainly expressed in skeletal muscle, liver, spleen and thymus. In terms of tissue distribution, expressed only in the testis among normal tissues but is expressed frequently in various cancer tissues and, particularly, in pancreatic, lung and endometrial cancers.

Essential for male fertility and sperm motility. During spermatogenesis, promotes the autophagic degradation of excessive ribosomes, providing energy resources for mitochondria and thus ensuring sperm flagellar motility. This is Armadillo repeat-containing protein 3 (ARMC3) from Homo sapiens (Human).